A 512-amino-acid polypeptide reads, in one-letter code: NAD-dependent deacetylase sir2A (512 aa).

The UBP-type zinc-finger motif lies at 7 to 110 (IECIHLKDEY…EILENIKSSN (104 aa)). 12 residues coordinate Zn(2+): Cys9, His11, Cys34, Cys37, Cys46, Cys49, Cys54, His61, His65, His71, Cys84, and Cys87. Residues 113–122 (DKIVPKKDQK) are compositionally biased toward basic and acidic residues. Residues 113-196 (DKIVPKKDQK…DESSSEGEES (84 aa)) are disordered. Positions 130-175 (VVPSASITTSSTTTSISKQTTVNNTTTTSSSSTTTTTTTTSTTINN) are enriched in low complexity. Over residues 176–195 (NEEEEESESETDESSSEGEE) the composition is skewed to acidic residues. One can recognise a Deacetylase sirtuin-type domain in the interval 231 to 503 (CVLKKPTIEE…LDLIKLLGWE (273 aa)). The active-site Proton acceptor is the His361. Residues Cys369, Cys372, Cys393, and Cys399 each coordinate Zn(2+).

It belongs to the sirtuin family. The cofactor is Zn(2+).

The enzyme catalyses N(6)-acetyl-L-lysyl-[protein] + NAD(+) + H2O = 2''-O-acetyl-ADP-D-ribose + nicotinamide + L-lysyl-[protein]. In terms of biological role, NAD-dependent deacetylase, which plays an important role in the regulation of transcriptional repression. This chain is NAD-dependent deacetylase sir2A (sir2A), found in Dictyostelium discoideum (Social amoeba).